The following is a 218-amino-acid chain: Pyridoxal phosphate homeostasis protein (218 aa).

An N6-(pyridoxal phosphate)lysine modification is found at lysine 25.

Belongs to the pyridoxal phosphate-binding protein YggS/PROSC family.

Functionally, pyridoxal 5'-phosphate (PLP)-binding protein, which is involved in PLP homeostasis. This is Pyridoxal phosphate homeostasis protein from Synechocystis sp. (strain ATCC 27184 / PCC 6803 / Kazusa).